Here is a 274-residue protein sequence, read N- to C-terminus: Thiamine kinase (274 aa).

Belongs to the thiamine kinase family.

The catalysed reaction is thiamine + ATP = thiamine phosphate + ADP + H(+). The protein operates within cofactor biosynthesis; thiamine diphosphate biosynthesis; thiamine phosphate from thiamine: step 1/1. Its function is as follows. Catalyzes the ATP-dependent phosphorylation of thiamine to thiamine phosphate. Is involved in thiamine salvage. The sequence is that of Thiamine kinase from Escherichia coli O157:H7.